We begin with the raw amino-acid sequence, 285 residues long: Bifunctional protein FolD 2 (285 aa).

NADP(+) contacts are provided by residues 164-166 (GRS), S189, and V230.

This sequence belongs to the tetrahydrofolate dehydrogenase/cyclohydrolase family. As to quaternary structure, homodimer.

The catalysed reaction is (6R)-5,10-methylene-5,6,7,8-tetrahydrofolate + NADP(+) = (6R)-5,10-methenyltetrahydrofolate + NADPH. It catalyses the reaction (6R)-5,10-methenyltetrahydrofolate + H2O = (6R)-10-formyltetrahydrofolate + H(+). The protein operates within one-carbon metabolism; tetrahydrofolate interconversion. Catalyzes the oxidation of 5,10-methylenetetrahydrofolate to 5,10-methenyltetrahydrofolate and then the hydrolysis of 5,10-methenyltetrahydrofolate to 10-formyltetrahydrofolate. This chain is Bifunctional protein FolD 2, found in Geobacter metallireducens (strain ATCC 53774 / DSM 7210 / GS-15).